Here is a 477-residue protein sequence, read N- to C-terminus: Glycogen synthase (477 aa).

K15 provides a ligand contact to ADP-alpha-D-glucose.

This sequence belongs to the glycosyltransferase 1 family. Bacterial/plant glycogen synthase subfamily.

It carries out the reaction [(1-&gt;4)-alpha-D-glucosyl](n) + ADP-alpha-D-glucose = [(1-&gt;4)-alpha-D-glucosyl](n+1) + ADP + H(+). It functions in the pathway glycan biosynthesis; glycogen biosynthesis. In terms of biological role, synthesizes alpha-1,4-glucan chains using ADP-glucose. The polypeptide is Glycogen synthase (Halorhodospira halophila (strain DSM 244 / SL1) (Ectothiorhodospira halophila (strain DSM 244 / SL1))).